The following is a 182-amino-acid chain: Ribosome-recycling factor (182 aa).

It belongs to the RRF family.

The protein resides in the cytoplasm. Its function is as follows. Responsible for the release of ribosomes from messenger RNA at the termination of protein biosynthesis. May increase the efficiency of translation by recycling ribosomes from one round of translation to another. The sequence is that of Ribosome-recycling factor from Synechococcus sp. (strain WH7803).